An 815-amino-acid polypeptide reads, in one-letter code: MFMSSSSSSHARRPQLSSFSYLHPPLPFPGLSFFNTRDKRVNFDSTRIICIAKSKPARTTPEYSDVLQTGLPLIVEDDIQEQEEPLEVSLENQIRQGVDIVKSMLGSMEDGETSISAYDTAWVALVENIHHPGSPQFPSSLQWIANNQLPDGSWGDPDVFLAHDRLINTLACVIALKKWNIHPHKCKRGLSFVKENISKLEKENEEHMLIGFEIAFPSLLEMAKKLGIEIPDDSPALQDIYTKRDLKLTRIPKDIMHNVPTTLLYSLEGLPSLDWEKLVKLQCTDGSFLFSPSSTACALMHTKDGNCFSYINNLVHKFNGGVPTVYPVDLFEHIWCVDRLQRLGISRFFHPEIKECLGYVHRYWTKDGICWARNSRVQDIDDTAMGFRLLRLHGYEVSPDVFKQFRKGDEFVCFMGQSNQAITGIYNLYRASQMMFPEETILEEAKKFSVNFLREKRAASELLDKWIITKDLPNEVGFALDVPWYACLPRVETRLYIEQYGGQDDVWIGKTLYRMPYVNNNVYLELAKLDYNNCQSLHRIEWDNIQKWYEGYNLGGFGVNKRSLLRTYFLATSNIFEPERSVERLTWAKTAILVQAIASYFENSREERIEFANEFQKFPNTRGYINGRRLDVKQATKGLIEMVFATLNQFSLDALVVHGEDITHHLYQSWEKWVLTWQEGGDRREGEAELLVQTINLMAGHTHSQEEELYERLFKLTNTVCHQLGHYHHLNKDKQPQQVEDNGGYNNSNPESISKLQIESDMRELVQLVLNSSDGMDSNIKQTFLAVTKSFYYTAFTHPGTVNYHIAKVLFERVV.

Residues 1–51 (MFMSSSSSSHARRPQLSSFSYLHPPLPFPGLSFFNTRDKRVNFDSTRIICI) constitute a chloroplast transit peptide. Lys247 lines the substrate pocket. 2 residues coordinate Mg(2+): Asp379 and Asp381. The DXDD motif motif lies at 379–382 (DIDD). Residue Lys465 coordinates substrate.

Belongs to the terpene synthase family. Tpsc subfamily. The cofactor is Mg(2+).

The protein localises to the plastid. It is found in the chloroplast. It carries out the reaction (2E,6E,10E)-geranylgeranyl diphosphate = (-)-kolavenyl diphosphate. Its activity is regulated as follows. Inhibited by high concentrations of magnesium. Diterpene synthase that catalyzes the formation of (-)-kolavenyl diphosphate from geranylgeranyl diphosphate (GGPP). In Tripterygium wilfordii (Thunder God vine), this protein is (-)-kolavenyl diphosphate synthase TPS14, chloroplastic.